Consider the following 444-residue polypeptide: Protein kinase C and casein kinase substrate in neurons protein 1 (444 aa).

A phosphoserine mark is found at Ser-2 and Ser-79. The F-BAR domain occupies 13–283 (EETTDSFWEV…AIRGADAQED (271 aa)). Residues 26–275 (KRTVKRIDDG…HVYRELEQAI (250 aa)) adopt a coiled-coil conformation. 2 disordered regions span residues 175–194 (MNSK…LQDK) and 309–386 (LPHT…DDSK). Residue Thr-184 is modified to Phosphothreonine. Positions 314 to 324 (TKKEKQPKKAE) are enriched in basic and acidic residues. Positions 329–351 (TNATGAVESTSQAGDRGSVSSYD) are enriched in polar residues. Residues Ser-346, Ser-348, Ser-349, Ser-361, and Ser-365 each carry the phosphoserine modification. The SH3 domain occupies 385-444 (SKGVRVRALYDYDGQEQDELSFKAGDELTKLGEEDEQGWCRGRLDSGQLGLYPANYVEAI). Tyr-394 carries the post-translational modification Phosphotyrosine. Phosphoserine occurs at positions 405 and 430.

The protein belongs to the PACSIN family. In terms of assembly, may form heterooligomers with other PACSINs. Interacts with MAPT. Interacts with TRPV4. Interacts (via SH3 domain) with SYNJ1 and WASL. Interacts with DNM2 and DNM3. Interacts with both COBL and DBNL. Identified in a complex composed of COBL, PACSIN1 and WASL. Interacts with EHD1 and EHD3. Homodimer. Interacts (via SH3 domain) with DNM1; the interaction is reduced by DNM1 phosphorylation. Phosphorylated by casein kinase 2 (CK2) and protein kinase C (PKC). As to expression, highly expressed in brain and, at much lower levels, in heart and pancreas.

Its subcellular location is the cytoplasm. The protein resides in the cell projection. It localises to the synapse. The protein localises to the synaptosome. It is found in the ruffle membrane. Its subcellular location is the membrane. The protein resides in the cytoplasmic vesicle membrane. It localises to the cytosol. The protein localises to the cell membrane. Functionally, plays a role in the reorganization of the microtubule cytoskeleton via its interaction with MAPT; this decreases microtubule stability and inhibits MAPT-induced microtubule polymerization. Plays a role in cellular transport processes by recruiting DNM1, DNM2 and DNM3 to membranes. Plays a role in the reorganization of the actin cytoskeleton and in neuron morphogenesis via its interaction with COBL and WASL, and by recruiting COBL to the cell cortex. Plays a role in the regulation of neurite formation, neurite branching and the regulation of neurite length. Required for normal synaptic vesicle endocytosis; this process retrieves previously released neurotransmitters to accommodate multiple cycles of neurotransmission. Required for normal excitatory and inhibitory synaptic transmission. Binds to membranes via its F-BAR domain and mediates membrane tubulation. In Homo sapiens (Human), this protein is Protein kinase C and casein kinase substrate in neurons protein 1 (PACSIN1).